An 804-amino-acid polypeptide reads, in one-letter code: uncharacterized protein (804 aa).

This is an uncharacterized protein from Methanothermobacter marburgensis (strain ATCC BAA-927 / DSM 2133 / JCM 14651 / NBRC 100331 / OCM 82 / Marburg) (Methanobacterium thermoautotrophicum).